We begin with the raw amino-acid sequence, 379 residues long: Homoserine O-acetyltransferase (379 aa).

The region spanning 52-356 (NVVMVLHALT…IRGHDGFLVE (305 aa)) is the AB hydrolase-1 domain. The active-site Nucleophile is Ser157. Position 227 (Arg227) interacts with substrate. Residues Asp320 and His350 contribute to the active site. Substrate is bound at residue Asp351.

The protein belongs to the AB hydrolase superfamily. MetX family. As to quaternary structure, homodimer.

It localises to the cytoplasm. It carries out the reaction L-homoserine + acetyl-CoA = O-acetyl-L-homoserine + CoA. The protein operates within amino-acid biosynthesis; L-methionine biosynthesis via de novo pathway; O-acetyl-L-homoserine from L-homoserine: step 1/1. In terms of biological role, transfers an acetyl group from acetyl-CoA to L-homoserine, forming acetyl-L-homoserine. This Mycobacterium marinum (strain ATCC BAA-535 / M) protein is Homoserine O-acetyltransferase.